The following is a 282-amino-acid chain: Phosphate import ATP-binding protein PstB (282 aa).

The segment at 1–33 (MNMAETQLNPIARPTAPAGFDPAQSGQSQAPSR) is disordered. The ABC transporter domain occupies 36–277 (IEINDLNFFY…PVRKETEDYI (242 aa)). 68–75 (GPSGCGKS) is an ATP binding site.

The protein belongs to the ABC transporter superfamily. Phosphate importer (TC 3.A.1.7) family. As to quaternary structure, the complex is composed of two ATP-binding proteins (PstB), two transmembrane proteins (PstC and PstA) and a solute-binding protein (PstS).

It localises to the cell inner membrane. The enzyme catalyses phosphate(out) + ATP + H2O = ADP + 2 phosphate(in) + H(+). Functionally, part of the ABC transporter complex PstSACB involved in phosphate import. Responsible for energy coupling to the transport system. The sequence is that of Phosphate import ATP-binding protein PstB from Paraburkholderia xenovorans (strain LB400).